The sequence spans 123 residues: Secreted RxLR effector protein RXLR-C21 (123 aa).

Positions 1–23 are cleaved as a signal peptide; sequence MRLHLLVLSVIVVSLLVSDNAHA. The short motif at 32-65 is the RxLR-dEER element; sequence RALRETPINGLVTNQLAVSRNLTPAKFITNSEER. Residues 101–121 form a helical membrane-spanning segment; the sequence is VTTICSIVLFVMVFGCLYKIF.

The protein belongs to the RxLR effector family.

It localises to the secreted. The protein resides in the host endoplasmic reticulum membrane. Secreted effector that does not suppress pattern-triggered immunity (PTI) in plant host. This Plasmopara halstedii (Downy mildew of sunflower) protein is Secreted RxLR effector protein RXLR-C21.